A 466-amino-acid chain; its full sequence is MSHSNHFDVIVIGSGPGGEGAAMGLTKAGLNVAIIEKESSVGGGCTHWGTIPSKALRHAVSRIIEFNSNPLFCQNNKSIHSTFSNILGHAKSVIDKQTRLRQGFYDRNQCTLVFGTARFIDTHTISVMQSDGTEEHYSADKFVIATGSRPYQPDNVDFMHERVYDSDSILSLKHDPQHIIIYGAGVIGCEYASIFRGLGVKTDLINTRDRLLSFLDNETSDALSYHFWNSGVVIRNDETFEKIEGTDDGVIIHLESGKKMRADCLLYANGRTGNTDKLNLGAVGLEADSRGQVSVNSNYQTSVEHVYAVGDVIGYPSLASAAYDQGRFVAQAVVKGEAERHLIEDIPTGIYTIPEISSVGKTEQELTAAKVPYEVGRSSFKHLARAQIAGKDIGSLKILFHRETKEILGIHVFGERAAEIIHIGQAIMEQKGEANTIEYFVNTTFNYPTMAEAYRVAALNGLNRLF.

36–45 (EKESSVGGGC) contributes to the FAD binding site.

This sequence belongs to the class-I pyridine nucleotide-disulfide oxidoreductase family. FAD serves as cofactor.

It is found in the cytoplasm. It catalyses the reaction NAD(+) + NADPH = NADH + NADP(+). In terms of biological role, conversion of NADPH, generated by peripheral catabolic pathways, to NADH, which can enter the respiratory chain for energy generation. The protein is Soluble pyridine nucleotide transhydrogenase of Vibrio atlanticus (strain LGP32) (Vibrio splendidus (strain Mel32)).